A 328-amino-acid chain; its full sequence is Nucleotide-binding protein Blon_1085/BLIJ_1109 (328 aa).

The tract at residues M1 to P33 is disordered. The span at A13–P29 shows a compositional bias: low complexity. An ATP-binding site is contributed by G46–S53. Residue D101–S104 participates in GTP binding.

Belongs to the RapZ-like family.

Displays ATPase and GTPase activities. This chain is Nucleotide-binding protein Blon_1085/BLIJ_1109, found in Bifidobacterium longum subsp. infantis (strain ATCC 15697 / DSM 20088 / JCM 1222 / NCTC 11817 / S12).